A 122-amino-acid polypeptide reads, in one-letter code: MARIAGVDLPRDKRVEIALTYIYGIGRSRSNEILAKAGVNPDTRVKDLTEEEVSRLREIIDKEYKVEGDLRKEVAMNIKRLMDIGCYRGIRHKRGLPVRGQRTRTNARTRKGPRKTVAKKKK.

The segment at 95 to 122 (GLPVRGQRTRTNARTRKGPRKTVAKKKK) is disordered.

The protein belongs to the universal ribosomal protein uS13 family. In terms of assembly, part of the 30S ribosomal subunit. Forms a loose heterodimer with protein S19. Forms two bridges to the 50S subunit in the 70S ribosome.

Located at the top of the head of the 30S subunit, it contacts several helices of the 16S rRNA. In the 70S ribosome it contacts the 23S rRNA (bridge B1a) and protein L5 of the 50S subunit (bridge B1b), connecting the 2 subunits; these bridges are implicated in subunit movement. Contacts the tRNAs in the A and P-sites. This is Small ribosomal subunit protein uS13 from Thermoanaerobacter pseudethanolicus (strain ATCC 33223 / 39E) (Clostridium thermohydrosulfuricum).